Reading from the N-terminus, the 802-residue chain is Osmosensitive cation channel TMEM63C (802 aa).

Topologically, residues 1 to 35 are extracellular; it reads MSAFPDSMDQKFHNMTVNECFQSRSTVLQGQPFGG. A helical membrane pass occupies residues 36-60; that stretch reads IPTVLVLNIILWVFVVLLYSFLRKA. Residues 61-124 are Cytoplasmic-facing; that stretch reads AWDYGRLALL…RDRDLINKCG (64 aa). Phosphoserine is present on residues Ser-75 and Ser-78. A helical transmembrane segment spans residues 125-157; the sequence is DDARIYITFQYHLIIFVLILCIPSLGIILPVNY. Residues 158–180 lie on the Extracellular side of the membrane; it reads IGTVLDWNSHFGRTTIVNVSTES. Residues 181–205 traverse the membrane as a helical segment; sequence KFLWLHSLFAFLYFLINLAFMGHHC. Residues 206–401 are Cytoplasmic-facing; sequence LGFVPKKSLH…IIWKHLSIRR (196 aa). A helical transmembrane segment spans residues 402-431; that stretch reads FSWWTRFIAINTFLFFLFFFLTTPAIIINT. The Extracellular segment spans residues 432 to 446; that stretch reads IDIYNVTRPIEKLQS. The chain crosses the membrane as a helical span at residues 447–476; the sequence is PIVTQFFPSVLLWAFTVTMPLLVYLSAFLE. Residues 477–480 are Cytoplasmic-facing; the sequence is AHWT. Residues 481 to 517 form a helical membrane-spanning segment; it reads RSSQNLIIVHKCYIFLVFMVVILPSMGLTSLHVFLRW. At 518–540 the chain is on the extracellular side; the sequence is LFDIYYLEHATIRFQCVFLPDNG. Residues 541–573 traverse the membrane as a helical segment; the sequence is AFFINYVITAALLGTGMELMRLGSLCTYCTRLF. Over 574–593 the chain is Cytoplasmic; it reads LSKSEPERVHIRKNQATDFQ. The chain crosses the membrane as a helical span at residues 594–612; the sequence is FGREYAWMLNVFSVVMAYS. Over 613–615 the chain is Extracellular; the sequence is ITC. Residues 616 to 640 traverse the membrane as a helical segment; the sequence is PIIVPFGLLYLCMKHITDRYNMYYS. Over 641–647 the chain is Cytoplasmic; that stretch reads YAPTKLN. The chain crosses the membrane as a helical span at residues 648-676; sequence AQIHMAAVYQAIFAPLLGLFWMLFFSILR. Residues 677 to 681 are Extracellular-facing; it reads VGSLH. Residues 682–702 form a helical membrane-spanning segment; it reads SITLFSMSSLIISVVIAFSGV. Residues 703–802 are Cytoplasmic-facing; it reads FLGKLRIAQR…EGLEMEGQSH (100 aa). Residues 753-785 are disordered; the sequence is TPASSPARHTYGTINSQPEEGEEESGLRGFARE.

The protein belongs to the CSC1 (TC 1.A.17) family. In terms of assembly, monomer.

It localises to the endoplasmic reticulum membrane. The protein localises to the cell membrane. It carries out the reaction Ca(2+)(in) = Ca(2+)(out). In terms of biological role, acts as an osmosensitive cation channel preferentially activated upon hypotonic stress. In contrast to TMEM63B, does not show phospholipid scramblase activity. Enriched in mitochondria-ER contact sites where it may regulate the metabolite flux and organelles' morphologies in response to osmotic changes. In particular may regulate mitochondrial motility and function in motor neuron axons. Required for the functional integrity of the kidney glomerular filtration barrier. This is Osmosensitive cation channel TMEM63C from Mus musculus (Mouse).